The sequence spans 241 residues: Glutathione S-transferase omega-1 (241 aa).

Residue serine 2 is modified to N-acetylserine. Positions 22-101 constitute a GST N-terminal domain; it reads GLIRVYSMRF…YLDEAYPGKK (80 aa). Catalysis depends on cysteine 32, which acts as the Nucleophile. N6-acetyllysine is present on lysine 57. Residues lysine 59, valine 72, and 85 to 86 each bind glutathione; that span reads ES. In terms of domain architecture, GST C-terminal spans 106 to 225; the sequence is DPYEKACQKM…HIEPRDLRAF (120 aa). N6-acetyllysine is present on residues lysine 143, lysine 148, and lysine 152.

As to quaternary structure, homodimer. In terms of tissue distribution, most abundant in the liver and skeletal muscle; also expressed in heart, diaphragm, colon, thymus, kidney, lung, ovaries, spleen, intestine and pancreas.

It localises to the cytoplasm. The protein localises to the cytosol. The enzyme catalyses RX + glutathione = an S-substituted glutathione + a halide anion + H(+). It carries out the reaction L-dehydroascorbate + 2 glutathione = glutathione disulfide + L-ascorbate. The catalysed reaction is methylarsonate + 2 glutathione + H(+) = methylarsonous acid + glutathione disulfide + H2O. In terms of biological role, exhibits glutathione-dependent thiol transferase and dehydroascorbate reductase activities. Has S-(phenacyl)glutathione reductase activity. Also has glutathione S-transferase activity. Participates in the biotransformation of inorganic arsenic and reduces monomethylarsonic acid (MMA) and dimethylarsonic acid. This is Glutathione S-transferase omega-1 (GSTO1) from Sus scrofa (Pig).